Reading from the N-terminus, the 208-residue chain is MVLDELISEFDRGLRSLTGISRMSRPVPVPTEPTVGELTPAERAHAAGLMRVNHVGEVCAQALYQAQKLTARSASSKAMFEEAAREEEDHLAWTAHRLKELDSRPSLLNPLWYAGALAIGVAAGTLGDKVSLGFMAETERQVESHLDGHLSELPATDTASRAIVEQMRVDEVKHGKAATDAGGIELPLPARMLMRAASKVMTRTAYYL.

Fe cation contacts are provided by glutamate 57, glutamate 87, histidine 90, glutamate 139, glutamate 171, and histidine 174.

It belongs to the COQ7 family. Fe cation serves as cofactor.

The protein localises to the cell membrane. The enzyme catalyses a 5-methoxy-2-methyl-3-(all-trans-polyprenyl)benzene-1,4-diol + AH2 + O2 = a 3-demethylubiquinol + A + H2O. The protein operates within cofactor biosynthesis; ubiquinone biosynthesis. Its function is as follows. Catalyzes the hydroxylation of 2-nonaprenyl-3-methyl-6-methoxy-1,4-benzoquinol during ubiquinone biosynthesis. The polypeptide is 3-demethoxyubiquinol 3-hydroxylase (Burkholderia ambifaria (strain MC40-6)).